A 70-amino-acid polypeptide reads, in one-letter code: Small ribosomal subunit protein bS21 (70 aa).

It belongs to the bacterial ribosomal protein bS21 family.

The sequence is that of Small ribosomal subunit protein bS21 from Albidiferax ferrireducens (strain ATCC BAA-621 / DSM 15236 / T118) (Rhodoferax ferrireducens).